Here is a 145-residue protein sequence, read N- to C-terminus: Transmembrane protein CCDC163 (145 aa).

Residues 38-54 form a helical membrane-spanning segment; the sequence is LIGLCICFFCSSGCIFL.

It is found in the membrane. The polypeptide is Transmembrane protein CCDC163 (Homo sapiens (Human)).